Here is a 1060-residue protein sequence, read N- to C-terminus: Anoctamin-8 (1060 aa).

The segment at 1-32 (MAEAASGAGDVTLEGERGKRPPPEGEPAAPAS) is disordered. Alanine 2 is modified (N-acetylalanine). Residues 2–244 (AEAASGAGDV…DDICDYFGVK (243 aa)) are Cytoplasmic-facing. Over residues 14-23 (EGERGKRPPP) the composition is skewed to basic and acidic residues. A helical membrane pass occupies residues 245 to 265 (IAMYFAWLGFYTSAMVYPAVF). The Extracellular segment spans residues 266–281 (GSVLYTFTEADQTSRD). A helical transmembrane segment spans residues 282 to 302 (VSCVVFALFNVIWSTLFLEEW). Over 303–356 (KRRGAELAYKWGTLDSPGEAVEEPRPQFRGIRRISPITRAEEFYYPPWKRLLFQ) the chain is Cytoplasmic. A Phosphoserine modification is found at serine 318. Residues 357 to 377 (LLVSLPLCLACLICVFILMLG) traverse the membrane as a helical segment. At 378–400 (CFQLQELVLSVKGLPRLVRFLPK) the chain is on the extracellular side. Residues 401-421 (VMLALLVSVSAEGYKKLAVWL) traverse the membrane as a helical segment. Residues 422 to 437 (NDMENYRLESTYERHL) are Cytoplasmic-facing. A helical membrane pass occupies residues 438–458 (IIKVVLFQFVNSYLSLFYIGF). At 459–745 (YLKDMDRLKE…YEDTFQDYQE (287 aa)) the chain is on the extracellular side. Disordered stretches follow at residues 529–605 (AQAD…SLLD), 619–640 (GAGR…SPTM), 653–672 (AEED…EPQT), and 680–723 (GEGR…HSPQ). The segment covering 534–547 (GGAGSRRCLGGGCG) has biased composition (gly residues). Composition is skewed to acidic residues over residues 549–559 (PEEENEEEEEA) and 581–602 (EEDE…EEGS). Serine 665 bears the Phosphoserine mark. The span at 680 to 694 (GEGRDQGPDGDRDTE) shows a compositional bias: basic and acidic residues. N-linked (GlcNAc...) asparagine glycosylation is present at asparagine 708. Residues 746 to 766 (MFVQFGYVVLFSSAFPLAALC) form a helical membrane-spanning segment. The Cytoplasmic segment spans residues 767 to 802 (ALVNNLIEIRSDAFKLCTGLQRPFGRRVESIGQWQK). Residue serine 796 is modified to Phosphoserine. A helical transmembrane segment spans residues 803 to 823 (VMEAMGVLAIVVNCYLIGQCG). Residues 824-836 (QLQRLFPWLSPEA) are Extracellular-facing. Residues 837 to 857 (AIVSVVVLEHLALLVKYLIHV) form a helical membrane-spanning segment. Residues 858–1060 (AIPDIPGWVA…PRPEDAGHRP (203 aa)) are Cytoplasmic-facing. Positions 884–1060 (HERQAQQRFQ…PRPEDAGHRP (177 aa)) are disordered. Basic and acidic residues-rich tracts occupy residues 899 to 927 (RREE…EARA) and 935 to 950 (VAER…ERPR). The segment covering 972–986 (TRPPAPTGCAPPPRS) has biased composition (pro residues). The residue at position 991 (arginine 991) is an Asymmetric dimethylarginine; alternate. Position 991 is an omega-N-methylarginine; alternate (arginine 991). An Omega-N-methylarginine modification is found at arginine 999. Basic and acidic residues predominate over residues 1049–1060 (PEPRPEDAGHRP).

This sequence belongs to the anoctamin family. Predominant expression seen in epithelial tissues.

The protein resides in the cell membrane. Its function is as follows. Does not exhibit calcium-activated chloride channel (CaCC) activity. The sequence is that of Anoctamin-8 (Ano8) from Mus musculus (Mouse).